Consider the following 242-residue polypeptide: Pyridoxine 5'-phosphate synthase (242 aa).

N7 is a binding site for 3-amino-2-oxopropyl phosphate. 9–10 (DH) is a 1-deoxy-D-xylulose 5-phosphate binding site. R18 contacts 3-amino-2-oxopropyl phosphate. The Proton acceptor role is filled by H44. Positions 46 and 51 each coordinate 1-deoxy-D-xylulose 5-phosphate. E71 serves as the catalytic Proton acceptor. T101 contributes to the 1-deoxy-D-xylulose 5-phosphate binding site. The active-site Proton donor is H192. 3-amino-2-oxopropyl phosphate contacts are provided by residues G193 and 214–215 (GH).

The protein belongs to the PNP synthase family. Homooctamer; tetramer of dimers.

Its subcellular location is the cytoplasm. The catalysed reaction is 3-amino-2-oxopropyl phosphate + 1-deoxy-D-xylulose 5-phosphate = pyridoxine 5'-phosphate + phosphate + 2 H2O + H(+). The protein operates within cofactor biosynthesis; pyridoxine 5'-phosphate biosynthesis; pyridoxine 5'-phosphate from D-erythrose 4-phosphate: step 5/5. Its function is as follows. Catalyzes the complicated ring closure reaction between the two acyclic compounds 1-deoxy-D-xylulose-5-phosphate (DXP) and 3-amino-2-oxopropyl phosphate (1-amino-acetone-3-phosphate or AAP) to form pyridoxine 5'-phosphate (PNP) and inorganic phosphate. This chain is Pyridoxine 5'-phosphate synthase, found in Synechocystis sp. (strain ATCC 27184 / PCC 6803 / Kazusa).